A 601-amino-acid polypeptide reads, in one-letter code: Glutamyl-tRNA(Gln) amidotransferase subunit B, mitochondrial (601 aa).

The transit peptide at 1-55 (MLRPWLRQCPRATRSLACPQCHLPRPQTARRALRPLPALSLSHPIRSLQTTTTES) directs the protein to the mitochondrion.

It belongs to the GatB/GatE family. GatB subfamily. In terms of assembly, subunit of the heterotrimeric GatCAB amidotransferase (AdT) complex, composed of A, B and C subunits.

The protein resides in the mitochondrion. The enzyme catalyses L-glutamyl-tRNA(Gln) + L-glutamine + ATP + H2O = L-glutaminyl-tRNA(Gln) + L-glutamate + ADP + phosphate + H(+). In terms of biological role, allows the formation of correctly charged Gln-tRNA(Gln) through the transamidation of misacylated Glu-tRNA(Gln) in the mitochondria. The reaction takes place in the presence of glutamine and ATP through an activated gamma-phospho-Glu-tRNA(Gln). The sequence is that of Glutamyl-tRNA(Gln) amidotransferase subunit B, mitochondrial from Aspergillus niger (strain ATCC MYA-4892 / CBS 513.88 / FGSC A1513).